Consider the following 147-residue polypeptide: Transcriptional repressor NrdR (147 aa).

Residues 3–34 (CLFCRSDDTKVIDSRTSEDGISIRRRRECQLC) fold into a zinc finger. Residues 46 to 136 (LTVIKRNGTS…VYQDFDSLED (91 aa)) enclose the ATP-cone domain.

This sequence belongs to the NrdR family. Zn(2+) is required as a cofactor.

In terms of biological role, negatively regulates transcription of bacterial ribonucleotide reductase nrd genes and operons by binding to NrdR-boxes. The sequence is that of Transcriptional repressor NrdR from Tropheryma whipplei (strain TW08/27) (Whipple's bacillus).